The primary structure comprises 567 residues: Zinc finger protein 512 (567 aa).

A disordered region spans residues 1–32; the sequence is MSSRLGAVPATSGPTTFKQQRSTRIVGAKNSR. Residues 12 to 23 show a composition bias toward polar residues; sequence SGPTTFKQQRST. Glycyl lysine isopeptide (Lys-Gly) (interchain with G-Cter in SUMO2) cross-links involve residues Lys18 and Lys84. Residues 86 to 148 form a disordered region; that stretch reads AATSHVEGSG…QARRIRKEPP (63 aa). Over residues 119–130 the composition is skewed to basic residues; it reads KKHKLYGRKQRP. The C2H2-type 1 zinc-finger motif lies at 197–220; it reads FTCHHCGKQLRSLAGMKYHVMANH. Lys227 participates in a covalent cross-link: Glycyl lysine isopeptide (Lys-Gly) (interchain with G-Cter in SUMO2). The segment at 287 to 310 adopts a C2H2-type 2 zinc-finger fold; it reads LKCHHCGKPYRSKAGLAYHLRSEH. Residue Lys333 forms a Glycyl lysine isopeptide (Lys-Gly) (interchain with G-Cter in SUMO2) linkage. Residues 406-430 form a C2H2-type 3; atypical zinc finger; sequence IQCPNQGCEAVYSSVSGLKAHLGSC. A C2H2-type 4 zinc finger spans residues 440 to 463; it reads YKCLLCQKEFVSESGVKYHINSVH. The disordered stretch occupies residues 486–567; the sequence is QRQQEEEKRR…PKTNHKRGRK (82 aa). The segment covering 495-508 has biased composition (basic residues); that stretch reads RQQHRSRRSLRRRQ. The span at 523 to 532 shows a compositional bias: basic and acidic residues; the sequence is VGKDQRRNNE. Basic residues predominate over residues 556–567; the sequence is KPPKTNHKRGRK.

This sequence belongs to the krueppel C2H2-type zinc-finger protein family.

The protein localises to the nucleus. Its function is as follows. May be involved in transcriptional regulation. This is Zinc finger protein 512 (ZNF512) from Pongo abelii (Sumatran orangutan).